A 407-amino-acid polypeptide reads, in one-letter code: Aspartate aminotransferase, cytoplasmic (407 aa).

Residues Gly-39, Trp-136, and Asn-189 each coordinate L-aspartate. The residue at position 253 (Lys-253) is an N6-(pyridoxal phosphate)lysine. Arg-381 provides a ligand contact to L-aspartate.

Belongs to the class-I pyridoxal-phosphate-dependent aminotransferase family. Homodimer. Pyridoxal 5'-phosphate is required as a cofactor.

The protein localises to the cytoplasm. The enzyme catalyses L-aspartate + 2-oxoglutarate = oxaloacetate + L-glutamate. In terms of biological role, important for the metabolism of amino acids and Krebs-cycle related organic acids. In plants, it is involved in nitrogen metabolism and in aspects of carbon and energy metabolism. In Oryza sativa subsp. japonica (Rice), this protein is Aspartate aminotransferase, cytoplasmic.